The following is a 493-amino-acid chain: E3 ubiquitin-protein ligase TRIM35 (493 aa).

At M1 the chain carries N-acetylmethionine. 2 positions are modified to phosphoserine: S4 and S8. The segment at 21-61 adopts an RING-type zinc-finger fold; that stretch reads CAVCYDPFRDAVTLRCGHNFCRGCVSRCWEVQVSPTCPVCK. The segment at 96 to 137 adopts a B box-type zinc-finger fold; that stretch reads RFSRVCRLHRGQLSLFCLEDKELLCCSCQADPRHQGHRVQPV. 4 residues coordinate Zn(2+): C101, H104, C123, and H129. Residues 210–251 are a coiled coil; sequence AEETRQKQLLADEKMKQLTEETEVLAHEIERLQMEMKEDDVS. The region spanning 284–487 is the B30.2/SPRY domain; it reads LGSLQYRVWK…LRICPLHISV (204 aa).

Belongs to the TRIM/RBCC family. In terms of assembly, interacts with PKM isoform M2, but not isoform M1; this interaction may compete with that between PKM and FGFR1, and hence reduces FGFR1-dependent tyrosine phosphorylation of PKM. Interacts with IRF7; this interaction promotes IRF7 proteasomal degradation. Interacts with TRAF3; this interaction promotes TRAF3 activation.

It is found in the cytoplasm. Its subcellular location is the nucleus. It catalyses the reaction S-ubiquitinyl-[E2 ubiquitin-conjugating enzyme]-L-cysteine + [acceptor protein]-L-lysine = [E2 ubiquitin-conjugating enzyme]-L-cysteine + N(6)-ubiquitinyl-[acceptor protein]-L-lysine.. The protein operates within protein modification; protein ubiquitination. E3 ubiquitin-protein ligase that participates in multiple biological processes including cell death, glucose metabolism, and in particular, the innate immune response. Mediates 'Lys-63'-linked polyubiquitination of TRAF3 thereby promoting type I interferon production via RIG-I signaling pathway. Can also catalyze 'Lys-48'-linked polyubiquitination and proteasomal degradation of viral proteins such as influenza virus PB2. Acts as a negative feedback regulator of TLR7- and TLR9-triggered signaling. Mechanistically, promotes the 'Lys-48'-linked ubiquitination of IRF7 and induces its degradation via a proteasome-dependent pathway. Reduces FGFR1-dependent tyrosine phosphorylation of PKM, inhibiting PKM-dependent lactate production, glucose metabolism, and cell growth. In Homo sapiens (Human), this protein is E3 ubiquitin-protein ligase TRIM35 (TRIM35).